Here is a 226-residue protein sequence, read N- to C-terminus: Neuron-specific vesicular protein calcyon (226 aa).

A disordered region spans residues 1–23 (MVKLGCSFSGKPGKETGDQDGAA). Residues 1-88 (MVKLGCSFSG…EEGRRLPTAR (88 aa)) are Extracellular-facing. Residues 89-109 (MIAFAMALLGCVLIMYKAIWY) form a helical membrane-spanning segment. Residues 110–226 (DQFTCPDGFL…AEDVPSQSPK (117 aa)) lie on the Cytoplasmic side of the membrane. Positions 189–226 (TAAAAAAAEGNEPSGKPLDMREKEDPQKAEDVPSQSPK) are disordered. The span at 206–219 (LDMREKEDPQKAED) shows a compositional bias: basic and acidic residues.

This sequence belongs to the NSG family. As to quaternary structure, interacts with CLTA. Expressed exclusively in neurons (at protein level). In all age groups, expressed at significantly higher levels in the medial prefrontal and orbital frontal cortices of spontaneously hypertensive rats (SHR), a model of attention deficit-hyperactivity disorder, than Wistar Kyoto (WKY) animals. In the motor cortex, dorsal striatum and nucleus accumbens, expression is significantly elevated in SHR only in younger animals.

The protein localises to the cytoplasmic vesicle membrane. It is found in the cell membrane. Its function is as follows. Interacts with clathrin light chain A and stimulates clathrin self-assembly and clathrin-mediated endocytosis. This Rattus norvegicus (Rat) protein is Neuron-specific vesicular protein calcyon (Caly).